Here is a 1551-residue protein sequence, read N- to C-terminus: UDP-glucose:glycoprotein glucosyltransferase 1 (1551 aa).

Positions 1–42 (MCSRGDANAAGAAAARRVTGLCYNMGLLIALALLCLFSLAEA) are cleaved as a signal peptide. Residues Asn269, Asn536, Asn1015, and Asn1228 are each glycosylated (N-linked (GlcNAc...) asparagine). The segment at 1244-1551 (KTEEVKQDKD…QEGSQKHEEL (308 aa)) is glucosyltransferase. Ser1277 carries the post-translational modification Phosphoserine. Residues 1531–1551 (KELGTLHEEETQEGSQKHEEL) form a disordered region. Positions 1548–1551 (HEEL) match the Prevents secretion from ER motif.

This sequence belongs to the glycosyltransferase 8 family. Monomer as well as in a tight complex with SELENOF. Interacts with METTL23. Part of a large chaperone multiprotein complex comprising DNAJB11, HSP90B1, HSPA5, HYOU, PDIA2, PDIA4, PDIA6, PPIB, SDF2L1, UGGT1 and very small amounts of ERP29, but not, or at very low levels, CALR nor CANX. Ca(2+) serves as cofactor.

Its subcellular location is the endoplasmic reticulum lumen. The protein resides in the endoplasmic reticulum-Golgi intermediate compartment. It carries out the reaction N(4)-(alpha-D-Man-(1-&gt;2)-alpha-D-Man-(1-&gt;2)-alpha-D-Man-(1-&gt;3)-[alpha-D-Man-(1-&gt;2)-alpha-D-Man-(1-&gt;3)-[alpha-D-Man-(1-&gt;2)-alpha-D-Man-(1-&gt;6)]-alpha-D-Man-(1-&gt;6)]-beta-D-Man-(1-&gt;4)-beta-D-GlcNAc-(1-&gt;4)-beta-D-GlcNAc)-L-asparaginyl-[protein] (N-glucan mannose isomer 9A1,2,3B1,2,3) + UDP-alpha-D-glucose = N(4)-(alpha-D-Glc-(1-&gt;3)-alpha-D-Man-(1-&gt;2)-alpha-D-Man-(1-&gt;2)-alpha-D-Man-(1-&gt;3)-[alpha-D-Man-(1-&gt;2)-alpha-D-Man-(1-&gt;3)-[alpha-D-Man-(1-&gt;2)-alpha-D-Man-(1-&gt;6)]-alpha-D-Man-(1-&gt;6)]-beta-D-Man-(1-&gt;4)-beta-D-GlcNAc-(1-&gt;4)-beta-D-GlcNAc)-L-asparaginyl-[protein] + UDP + H(+). It functions in the pathway protein modification; protein glycosylation. Its function is as follows. Recognizes glycoproteins with minor folding defects. Reglucosylates single N-glycans near the misfolded part of the protein, thus providing quality control for protein folding in the endoplasmic reticulum. Reglucosylated proteins are recognized by calreticulin for recycling to the endoplasmic reticulum and refolding or degradation. In Rattus norvegicus (Rat), this protein is UDP-glucose:glycoprotein glucosyltransferase 1 (Uggt1).